Reading from the N-terminus, the 213-residue chain is 3,4-dihydroxy-2-butanone 4-phosphate synthase (213 aa).

Residues 37–38 (RE), Asp-42, 150–154 (RAGHT), and Glu-174 contribute to the D-ribulose 5-phosphate site. Glu-38 is a Mg(2+) binding site. A Mg(2+)-binding site is contributed by His-153.

The protein belongs to the DHBP synthase family. In terms of assembly, homodimer. Mg(2+) serves as cofactor. The cofactor is Mn(2+).

The catalysed reaction is D-ribulose 5-phosphate = (2S)-2-hydroxy-3-oxobutyl phosphate + formate + H(+). The protein operates within cofactor biosynthesis; riboflavin biosynthesis; 2-hydroxy-3-oxobutyl phosphate from D-ribulose 5-phosphate: step 1/1. Catalyzes the conversion of D-ribulose 5-phosphate to formate and 3,4-dihydroxy-2-butanone 4-phosphate. In Buchnera aphidicola subsp. Schizaphis graminum (strain Sg), this protein is 3,4-dihydroxy-2-butanone 4-phosphate synthase.